We begin with the raw amino-acid sequence, 426 residues long: UDP-N-acetylglucosamine 1-carboxyvinyltransferase (426 aa).

Residue 22–23 (KN) participates in phosphoenolpyruvate binding. Arginine 93 serves as a coordination point for UDP-N-acetyl-alpha-D-glucosamine. Aspartate 117 functions as the Proton donor in the catalytic mechanism. The UDP-N-acetyl-alpha-D-glucosamine site is built by aspartate 312 and methionine 334.

It belongs to the EPSP synthase family. MurA subfamily.

The protein resides in the cytoplasm. The catalysed reaction is phosphoenolpyruvate + UDP-N-acetyl-alpha-D-glucosamine = UDP-N-acetyl-3-O-(1-carboxyvinyl)-alpha-D-glucosamine + phosphate. Its pathway is cell wall biogenesis; peptidoglycan biosynthesis. Functionally, cell wall formation. Adds enolpyruvyl to UDP-N-acetylglucosamine. The protein is UDP-N-acetylglucosamine 1-carboxyvinyltransferase of Treponema denticola (strain ATCC 35405 / DSM 14222 / CIP 103919 / JCM 8153 / KCTC 15104).